Here is a 173-residue protein sequence, read N- to C-terminus: uncharacterized protein (173 aa).

Helical transmembrane passes span 13–35 (LQVILKFFFALLCFCIILFPLLS), 50–72 (IIFIYYFMSLYSLNIFSIFFLGL), 107–129 (NYLINFVVFCFYCLFILNFKYLL), and 139–161 (GYLIIFFQSLTTIFSYNIIRLIL).

Its subcellular location is the cell membrane. This is an uncharacterized protein from Rickettsia prowazekii (strain Madrid E).